A 104-amino-acid polypeptide reads, in one-letter code: Pterin-4-alpha-carbinolamine dehydratase (104 aa).

The residue at position 2 (A2) is an N-acetylalanine. Residues D61–H63 and S78–E81 each bind substrate.

This sequence belongs to the pterin-4-alpha-carbinolamine dehydratase family. In terms of assembly, homotetramer and homodimer. Heterotetramer with HNF1A; formed by a dimer of dimers. Interacts with HNF1B (via HNF-p1 domain); the interaction increases HNF1B transactivation activity. In terms of tissue distribution, mainly expressed in the liver, in pancreatic cells, and in the kidney, especially in the distal convoluted tubule, in the cortical thick ascending limb of Henle's loop and in the connecting tubule.

The protein localises to the cytoplasm. It localises to the nucleus. The enzyme catalyses (4aS,6R)-4a-hydroxy-L-erythro-5,6,7,8-tetrahydrobiopterin = (6R)-L-erythro-6,7-dihydrobiopterin + H2O. Functionally, involved in tetrahydrobiopterin biosynthesis. Seems to both prevent the formation of 7-pterins and accelerate the formation of quinonoid-BH2. Coactivator for HNF1A-dependent transcription. Regulates the dimerization of homeodomain protein HNF1A and enhances its transcriptional activity. Also acts as a coactivator for HNF1B-dependent transcription. This is Pterin-4-alpha-carbinolamine dehydratase (Pcbd1) from Mus musculus (Mouse).